The following is a 115-amino-acid chain: UPF0102 protein NMA0341 (115 aa).

The protein belongs to the UPF0102 family.

This is UPF0102 protein NMA0341 from Neisseria meningitidis serogroup A / serotype 4A (strain DSM 15465 / Z2491).